The sequence spans 2075 residues: Autophagy-related protein 2 homolog B (2075 aa).

In terms of domain architecture, Chorein N-terminal spans 13-107; the sequence is ACRYLLQRYL…LEMVFRPRPR (95 aa). Residues serine 255, serine 379, serine 496, serine 839, serine 885, serine 898, and serine 1007 each carry the phosphoserine modification. Tyrosine 1011 carries the phosphotyrosine modification. Phosphoserine is present on residues serine 1015 and serine 1017. Phosphothreonine is present on threonine 1021. A disordered region spans residues 1373-1403; the sequence is KAEMKPGVPQRKPKVDSSARSSSHGPVLPEA. Serine 1525 carries the post-translational modification Phosphoserine. Disordered regions lie at residues 1570-1593, 1759-1792, and 2055-2075; these read TSPA…GRHT, EPNL…EDVS, and RNQI…HGED. The segment covering 1578–1587 has biased composition (polar residues); that stretch reads PHSSPSQTPT. The segment covering 2058-2075 has biased composition (basic and acidic residues); that stretch reads IRPDVRQDESQKWRHGED.

Belongs to the ATG2 family. In terms of assembly, interacts with WDR45/WIPI4.

Its subcellular location is the preautophagosomal structure membrane. It localises to the lipid droplet. The protein localises to the endoplasmic reticulum membrane. It catalyses the reaction a 1,2-diacyl-sn-glycero-3-phospho-L-serine(in) = a 1,2-diacyl-sn-glycero-3-phospho-L-serine(out). The catalysed reaction is a 1,2-diacyl-sn-glycero-3-phosphoethanolamine(in) = a 1,2-diacyl-sn-glycero-3-phosphoethanolamine(out). In terms of biological role, lipid transfer protein required for both autophagosome formation and regulation of lipid droplet morphology and dispersion. Tethers the edge of the isolation membrane (IM) to the endoplasmic reticulum (ER) and mediates direct lipid transfer from ER to IM for IM expansion. Binds to the ER exit site (ERES), which is the membrane source for autophagosome formation, and extracts phospholipids from the membrane source and transfers them to ATG9 (ATG9A or ATG9B) to the IM for membrane expansion. Lipid transfer activity is enhanced by WDR45/WIPI4, which promotes ATG2B-association with phosphatidylinositol 3-monophosphate (PI3P)-containing membranes. The polypeptide is Autophagy-related protein 2 homolog B (Mus musculus (Mouse)).